We begin with the raw amino-acid sequence, 1687 residues long: Vitellogenin-2 (1687 aa).

The signal sequence occupies residues 1-15; that stretch reads MRVLVLALTVALVAG. The Vitellogenin domain occupies 24-663; the sequence is FAPGKTYEYK…DAATVLPKNI (640 aa). N-linked (GlcNAc...) asparagine glycans are attached at residues Asn-941, Asn-945, Asn-954, Asn-1004, Asn-1019, and Asn-1083. Residues 1081–1174 are disordered; it reads LKNSTKASSS…SSSSSKTKWQ (94 aa). A compositionally biased stretch (low complexity) spans 1088–1127; sequence SSSSSGSSRSSRSRSSSSSSSSSSSSSSRSSSSSSRSSSS. N-linked (GlcNAc...) asparagine glycosylation occurs at Asn-1142. Residues 1148-1169 are compositionally biased toward low complexity; that stretch reads SSSSSSSSSSSSSSSSSSSSSS. Residues Asn-1179, Asn-1257, Asn-1292, Asn-1342, Asn-1361, Asn-1366, and Asn-1390 are each glycosylated (N-linked (GlcNAc...) asparagine). Positions 1417–1593 constitute a VWFD domain; sequence AECTVVEDTV…SWVLPAKSCR (177 aa). Disulfide bonds link Cys-1419–Cys-1556 and Cys-1442–Cys-1592. Residues Asn-1577 and Asn-1655 are each glycosylated (N-linked (GlcNAc...) asparagine).

In terms of processing, phosvitin, an egg yolk storage protein, is one of the most highly phosphorylated (10%) proteins in nature. Produced by the liver, secreted into the blood and then sequestered by receptor mediated endocytosis into growing oocytes, where it is generally cleaved, giving rise to the respective yolk components lipovitellins and phosvitin.

Precursor of the egg-yolk proteins that are sources of nutrients during early development of oviparous organisms. This chain is Vitellogenin-2, found in Fundulus heteroclitus (Killifish).